A 213-amino-acid chain; its full sequence is Glycerol-3-phosphate acyltransferase (213 aa).

5 consecutive transmembrane segments (helical) span residues 3 to 23, 51 to 71, 78 to 98, 115 to 135, and 140 to 160; these read ILLA…VVVS, KAAI…VWLA, DVAI…PVFF, AVHP…AFFF, and LAAL…FGMP.

It belongs to the PlsY family. In terms of assembly, probably interacts with PlsX.

It localises to the cell inner membrane. It catalyses the reaction an acyl phosphate + sn-glycerol 3-phosphate = a 1-acyl-sn-glycero-3-phosphate + phosphate. Its pathway is lipid metabolism; phospholipid metabolism. Catalyzes the transfer of an acyl group from acyl-phosphate (acyl-PO(4)) to glycerol-3-phosphate (G3P) to form lysophosphatidic acid (LPA). This enzyme utilizes acyl-phosphate as fatty acyl donor, but not acyl-CoA or acyl-ACP. The polypeptide is Glycerol-3-phosphate acyltransferase (Burkholderia cenocepacia (strain HI2424)).